We begin with the raw amino-acid sequence, 149 residues long: Hut operon positive regulatory protein (149 aa).

It belongs to the HutP family. Homohexamer.

Its function is as follows. Antiterminator that binds to cis-acting regulatory sequences on the mRNA in the presence of histidine, thereby suppressing transcription termination and activating the hut operon for histidine utilization. This is Hut operon positive regulatory protein from Geobacillus sp. (strain WCH70).